A 476-amino-acid chain; its full sequence is Bifunctional protein HldE (476 aa).

The tract at residues 1-318 (MFQYSAEFKQ…ENAIHGRSNT (318 aa)) is ribokinase. 195 to 198 (NMSE) serves as a coordination point for ATP. Aspartate 264 is a catalytic residue. Residues 344–476 (MTNGCFDILH…VISKIQQLKD (133 aa)) form a cytidylyltransferase region.

In the N-terminal section; belongs to the carbohydrate kinase PfkB family. The protein in the C-terminal section; belongs to the cytidylyltransferase family. As to quaternary structure, homodimer.

The catalysed reaction is D-glycero-beta-D-manno-heptose 7-phosphate + ATP = D-glycero-beta-D-manno-heptose 1,7-bisphosphate + ADP + H(+). It catalyses the reaction D-glycero-beta-D-manno-heptose 1-phosphate + ATP + H(+) = ADP-D-glycero-beta-D-manno-heptose + diphosphate. Its pathway is nucleotide-sugar biosynthesis; ADP-L-glycero-beta-D-manno-heptose biosynthesis; ADP-L-glycero-beta-D-manno-heptose from D-glycero-beta-D-manno-heptose 7-phosphate: step 1/4. It participates in nucleotide-sugar biosynthesis; ADP-L-glycero-beta-D-manno-heptose biosynthesis; ADP-L-glycero-beta-D-manno-heptose from D-glycero-beta-D-manno-heptose 7-phosphate: step 3/4. The protein operates within bacterial outer membrane biogenesis; LPS core biosynthesis. Catalyzes the phosphorylation of D-glycero-D-manno-heptose 7-phosphate at the C-1 position to selectively form D-glycero-beta-D-manno-heptose-1,7-bisphosphate. Functionally, catalyzes the ADP transfer from ATP to D-glycero-beta-D-manno-heptose 1-phosphate, yielding ADP-D-glycero-beta-D-manno-heptose. This Pasteurella multocida (strain Pm70) protein is Bifunctional protein HldE.